A 271-amino-acid chain; its full sequence is 5-deoxy-glucuronate isomerase (271 aa).

This sequence belongs to the isomerase IolB family.

It carries out the reaction 5-deoxy-D-glucuronate = 5-dehydro-2-deoxy-D-gluconate. It participates in polyol metabolism; myo-inositol degradation into acetyl-CoA; acetyl-CoA from myo-inositol: step 4/7. In terms of biological role, involved in the isomerization of 5-deoxy-glucuronate (5DG) to 5-dehydro-2-deoxy-D-gluconate (DKG or 2-deoxy-5-keto-D-gluconate). This is 5-deoxy-glucuronate isomerase from Lacticaseibacillus casei (Lactobacillus casei).